A 70-amino-acid chain; its full sequence is Protein SlyX homolog (70 aa).

It belongs to the SlyX family.

The polypeptide is Protein SlyX homolog (Shewanella sp. (strain MR-4)).